Reading from the N-terminus, the 91-residue chain is MYHNGMQLHLTRRSGMWHLLVSMGNNSTSVLLESSSSTRRRPRWSYIRRHNQVSILLLVGSNLQWLITIFPNMSQILCQTMPLHFTGCQDI.

A nucleolar localization signal region spans residues E33–N51.

It belongs to the orthobunyavirus NS-S protein family.

It localises to the host nucleus. It is found in the host nucleolus. Functionally, plays a role in the inhibition of the host immune response by interfering with the production of interferon in infected cells. Induces host nucleolar disorganization and host POLR2A/RPB1 degradation leading to host transcriptional shutoff. This Bos taurus (Bovine) protein is Non-structural protein NS-S (N).